Here is a 358-residue protein sequence, read N- to C-terminus: Electron transfer flavoprotein subunit alpha, mitochondrial (358 aa).

298–326 (LYMAFGVSGAIQHLAGMRDSKVIVAVNKD) is an FAD binding site.

It belongs to the ETF alpha-subunit/FixB family. Heterodimer of an alpha and a beta subunit. The cofactor is FAD.

Its subcellular location is the mitochondrion matrix. Functionally, the electron transfer flavoprotein serves as a specific electron acceptor for several dehydrogenases, including five acyl-CoA dehydrogenases, glutaryl-CoA and sarcosine dehydrogenase. It transfers the electrons to the main mitochondrial respiratory chain via ETF-ubiquinone oxidoreductase (ETF dehydrogenase). The protein is Electron transfer flavoprotein subunit alpha, mitochondrial (ETFA) of Oryza sativa subsp. indica (Rice).